The chain runs to 607 residues: Albumin (607 aa).

A signal peptide spans 1-18 (MKWVTFVSLLFLFSSAYF). Residues 19–24 (RGVLRR) constitute a propeptide that is removed on maturation. Albumin domains lie at 19–209 (RGVL…DALK), 210–402 (ERIL…QFTP), and 403–600 (LVEE…KLVA). His27 lines the Cu cation pocket. The residue at position 29 (Ser29) is a Phosphoserine. 2 residues coordinate Ca(2+): Glu30 and Asp37. Cys77 and Cys86 form a disulfide bridge. Phosphoserine is present on residues Ser82 and Ser89. Position 91 (His91) interacts with Zn(2+). 6 disulfides stabilise this stretch: Cys99–Cys115, Cys114–Cys125, Cys147–Cys192, Cys191–Cys200, Cys223–Cys269, and Cys268–Cys276. Thr107 carries the phosphothreonine modification. Lys228 bears the N6-succinyllysine mark. Glu267 contacts Ca(2+). His270 and Asp272 together coordinate Zn(2+). Ca(2+) contacts are provided by Asp272, Glu275, Asp278, and Asp282. Cystine bridges form between Cys288–Cys302, Cys301–Cys312, Cys339–Cys384, Cys383–Cys392, Cys415–Cys461, Cys460–Cys471, Cys484–Cys500, and Cys499–Cys510. Ser442 is subject to Phosphoserine. Residues Thr443 and Thr445 each carry the phosphothreonine modification. Ser512 carries the post-translational modification Phosphoserine. Intrachain disulfides connect Cys537–Cys582 and Cys581–Cys590. An N6-methyllysine modification is found at Lys557. The residue at position 569 (Thr569) is a Phosphothreonine. Lys587 carries the post-translational modification N6-succinyllysine.

It belongs to the ALB/AFP/VDB family. Interacts with FCGRT; this interaction regulates ALB homeostasis. Interacts with TASOR. In plasma, occurs in a covalently-linked complex with chromophore-bound alpha-1-microglobulin; this interaction does not prevent fatty acid binding to ALB. Post-translationally, phosphorylated by FAM20C in the extracellular medium. In terms of tissue distribution, plasma.

It is found in the secreted. Functionally, binds water, Ca(2+), Na(+), K(+), fatty acids, hormones, bilirubin and drugs. Its main function is the regulation of the colloidal osmotic pressure of blood. Major zinc transporter in plasma, typically binds about 80% of all plasma zinc. Major calcium and magnesium transporter in plasma, binds approximately 45% of circulating calcium and magnesium in plasma. Potentially has more than two calcium-binding sites and might additionally bind calcium in a non-specific manner. The shared binding site between zinc and calcium at residue Asp-272 suggests a crosstalk between zinc and calcium transport in the blood. The rank order of affinity is zinc &gt; calcium &gt; magnesium. Binds to the bacterial siderophore enterobactin and inhibits enterobactin-mediated iron uptake of E.coli from ferric transferrin, and may thereby limit the utilization of iron and growth of enteric bacteria such as E.coli. Does not prevent iron uptake by the bacterial siderophore aerobactin. The chain is Albumin (ALB) from Equus asinus (Donkey).